Here is a 59-residue protein sequence, read N- to C-terminus: Venom protein 37.1 (59 aa).

The N-terminal stretch at 1–18 (MVSTLMIASVKLRLYCTA) is a signal peptide.

It belongs to the non-disulfide-bridged peptide (NDBP) superfamily. Long chain multifunctional peptide (group 2) family. In terms of tissue distribution, expressed by the venom gland.

Its subcellular location is the secreted. The protein is Venom protein 37.1 of Lychas mucronatus (Chinese swimming scorpion).